Reading from the N-terminus, the 355-residue chain is Probable butyrate kinase (355 aa).

The protein belongs to the acetokinase family.

The protein resides in the cytoplasm. It carries out the reaction butanoate + ATP = butanoyl phosphate + ADP. The polypeptide is Probable butyrate kinase (Clostridium botulinum (strain Alaska E43 / Type E3)).